The chain runs to 1020 residues: Mastermind-like protein 1 (1020 aa).

The segment at M1–A97 is required for interaction with NOTCH proteins. Position 45 is a phosphoserine (S45). Positions K67–Q76 are enriched in basic residues. Residues K67–D191 are disordered. Positions P77 to L99 are enriched in low complexity. Residues D100–L122 show a composition bias toward basic and acidic residues. The span at S124–Q133 shows a compositional bias: polar residues. Residues S127, S310, S321, and S367 each carry the phosphoserine modification. 6 disordered regions span residues G335–T522, P575–A598, E663–F686, S725–A748, Q794–T866, and A888–L959. Residues D344 to N369 are compositionally biased toward polar residues. Residues A373–A383 are compositionally biased toward low complexity. Residues E399 to A410 are compositionally biased toward polar residues. Low complexity predominate over residues L419–A435. Over residues P491–S515 the composition is skewed to polar residues. The segment covering P588–A598 has biased composition (low complexity). Over residues Q794–K818 the composition is skewed to polar residues. Position 827 is an N6-acetyllysine (K827). Residues M837–P864 show a composition bias toward polar residues. The span at S911–A920 shows a compositional bias: low complexity. S1019 is modified (phosphoserine).

The protein belongs to the mastermind family. As to quaternary structure, interacts (via N-terminus) with NOTCH1, NOTCH2, NOTCH3 and NOTCH4 (via ankyrin repeat region). Interacts (via N-terminus) with p53 (via DNA-binding region). Forms a DNA-binding complex with Notch proteins and RBPSUH/RBP-J kappa/CBF1. Also binds CREBBP/CBP and CDK8. Forms a complex with PRAG1, NOTCH1 and MAML1, in a MAML1-dependent manner. As to expression, at E9.5, strongly expressed in the telencephalon, first branchial arch, forelimb buds and somites. By 10.5 dpc, continuously expressed in brain and spinal cord. Also expressed in first and second branchial arches and limb buds. By 11.5 dpc, expression in CNS is weak but increases in mesodermal tissues. At 14.5 dpc, detected in epithelial cells in trachea, esophagus and proximal and distal tubules of the developing lungs.

Its subcellular location is the nucleus speckle. Acts as a transcriptional coactivator for NOTCH proteins. Has been shown to amplify NOTCH-induced transcription of HES1. Enhances phosphorylation and proteolytic turnover of the NOTCH intracellular domain in the nucleus through interaction with CDK8. Binds to CREBBP/CBP which promotes nucleosome acetylation at NOTCH enhancers and activates transcription. Induces phosphorylation and localization of CREBBP to nuclear foci. Plays a role in hematopoietic development by regulating NOTCH-mediated lymphoid cell fate decisions. The polypeptide is Mastermind-like protein 1 (Mus musculus (Mouse)).